The sequence spans 129 residues: SOSS complex subunit C homolog (129 aa).

Residues 105–129 are disordered; that stretch reads RLEPLPSPATTPTTPNAPPSHSISK.

Belongs to the SOSS-C family.

In Drosophila simulans (Fruit fly), this protein is SOSS complex subunit C homolog.